The primary structure comprises 512 residues: NAD(P) transhydrogenase subunit alpha (512 aa).

Residues 1 to 400 (MLIGVPRELL…KESKPTDPRV (400 aa)) are Cytoplasmic-facing. Residues 125-128 (QALD), Val175, 195-197 (DSR), and Gly225 contribute to the NAD(+) site. The tract at residues 375 to 394 (SAQPKQETKAAPVAEKKESK) is disordered. Transmembrane regions (helical) follow at residues 401–421 (KYGVMAGVGVLFLWLASVAPA) and 422–442 (AFLSHFTVFVLACVVGYYVVW). Topologically, residues 443–451 (NVSHALHTP) are cytoplasmic. The helical transmembrane segment at 452-472 (LMAVTNAISGIIIVGALLQIR) threads the bilayer. Over 473 to 478 (QPTGNL) the chain is Periplasmic. The helical transmembrane segment at 479 to 499 (FIDALAFVAILVASINIFGGF) threads the bilayer. The Cytoplasmic segment spans residues 500–512 (RVTQRMLAMFRKG).

This sequence belongs to the AlaDH/PNT family. In terms of assembly, heterodimer of an alpha (PntA) and a beta (PntB) chain.

Its subcellular location is the cell inner membrane. The enzyme catalyses NAD(+) + NADPH + H(+)(in) = NADH + NADP(+) + H(+)(out). In terms of biological role, the transhydrogenation between NADH and NADP is coupled to respiration and ATP hydrolysis and functions as a proton pump across the membrane. The sequence is that of NAD(P) transhydrogenase subunit alpha (pntA) from Haemophilus influenzae (strain ATCC 51907 / DSM 11121 / KW20 / Rd).